The following is a 368-amino-acid chain: Homoserine O-acetyltransferase (368 aa).

Positions Asn47–Leu349 constitute an AB hydrolase-1 domain. The Nucleophile role is filled by Ser153. Position 221 (Arg221) interacts with substrate. Active-site residues include Asp311 and His344. Position 345 (Asp345) interacts with substrate.

Belongs to the AB hydrolase superfamily. MetX family. In terms of assembly, homodimer.

The protein resides in the cytoplasm. It carries out the reaction L-homoserine + acetyl-CoA = O-acetyl-L-homoserine + CoA. It participates in amino-acid biosynthesis; L-methionine biosynthesis via de novo pathway; O-acetyl-L-homoserine from L-homoserine: step 1/1. Functionally, transfers an acetyl group from acetyl-CoA to L-homoserine, forming acetyl-L-homoserine. The polypeptide is Homoserine O-acetyltransferase (Leptospira borgpetersenii serovar Hardjo-bovis (strain JB197)).